The chain runs to 595 residues: UvrABC system protein C (595 aa).

Positions 14–91 (SNPGCYLHKD…IQENMPKFNI (78 aa)) constitute a GIY-YIG domain. Residues 196–231 (DKIVNQLKAKMKDMSDQMAFERAAEYRDLIEAVSTL) form the UVR domain.

The protein belongs to the UvrC family. As to quaternary structure, interacts with UvrB in an incision complex.

Its subcellular location is the cytoplasm. Its function is as follows. The UvrABC repair system catalyzes the recognition and processing of DNA lesions. UvrC both incises the 5' and 3' sides of the lesion. The N-terminal half is responsible for the 3' incision and the C-terminal half is responsible for the 5' incision. The protein is UvrABC system protein C of Streptococcus thermophilus (strain ATCC BAA-491 / LMD-9).